The primary structure comprises 250 residues: UPF0309 protein BH0227 (250 aa).

In terms of domain architecture, SIS spans Val31 to Pro214.

This sequence belongs to the UPF0309 family.

This chain is UPF0309 protein BH0227, found in Halalkalibacterium halodurans (strain ATCC BAA-125 / DSM 18197 / FERM 7344 / JCM 9153 / C-125) (Bacillus halodurans).